The sequence spans 115 residues: Transcriptional regulator protein FixT (115 aa).

In terms of assembly, interacts directly with FixL.

Its function is as follows. Prevents transcription of the intermediate key regulatory genes nifA and fixK by counteracting the activity of the FixLJ two-component system. Acts as an inhibitor of the sensor hemoprotein kinase fixL, preventing the production or the accumulation of its phosphorylated form. This chain is Transcriptional regulator protein FixT (fixT), found in Rhizobium meliloti (strain 1021) (Ensifer meliloti).